Here is a 272-residue protein sequence, read N- to C-terminus: Arylesterase (272 aa).

The region spanning 21–253 is the AB hydrolase-1 domain; it reads KPVLFSHGWL…LKVYKDAPHG (233 aa). Residue Trp29 participates in acetate binding. Residue Ser95 is part of the active site. Acetate is bound at residue Met96. Catalysis depends on residues Asp223 and His252.

Belongs to the AB hydrolase superfamily. Bacterial non-heme haloperoxidase / perhydrolase family. As to quaternary structure, dimer of trimers.

The catalysed reaction is a phenyl acetate + H2O = a phenol + acetate + H(+). It catalyses the reaction peracetic acid + H2O = acetate + H2O2 + H(+). The enzyme catalyses a percarboxylic acid + H2O = a carboxylate + H2O2 + H(+). Functionally, hydrolyzes phenolic esters, such as phenyl acetate, nitrophenyl acetate and naphtyl acetate. Can act on a wide range of esters, but reaction rate and enantioselectivity differ significantly depending on the substrate. Shows a preference for esters with small acyl groups. Also shows low perhydrolase activity, and catalyzes the reversible formation of peroxycarboxylic acids from carboxylic acids and hydrogen peroxide. In vitro, enzyme-generated peracetic acid oxidizes bromide ion to bromonium, which reacts with monochlorodimedone to form bromochlorodimedone. In Pseudomonas fluorescens, this protein is Arylesterase.